The sequence spans 221 residues: MPKLTWQLLLSQEKNLPYFKNIFTILNQQKKSGKIIYPKQNDIFNVFRFTAFESIKVVIIGQDPYHGYNQAHGLAFSVPHGIPLPPSLKNIYKELETDIPGFIKPQHGCLSSWSKEGVFLLNSILTVEQGKSRSHAHIGWELFTDKVIHTLNTYRQNLVFLLWGKHAQQKSHIINNQKHHILITSHPSPISAKYGFLGCKHFSKTNTFLANQNQHIINWQL.

D63 functions as the Proton acceptor in the catalytic mechanism.

This sequence belongs to the uracil-DNA glycosylase (UDG) superfamily. UNG family.

It localises to the cytoplasm. It carries out the reaction Hydrolyzes single-stranded DNA or mismatched double-stranded DNA and polynucleotides, releasing free uracil.. Its function is as follows. Excises uracil residues from the DNA which can arise as a result of misincorporation of dUMP residues by DNA polymerase or due to deamination of cytosine. This chain is Uracil-DNA glycosylase, found in Blochmanniella floridana.